Here is a 34-residue protein sequence, read N- to C-terminus: Cytochrome c oxidase polypeptide 2A (34 aa).

M1 is subject to N-formylmethionine. Residues 4 to 34 form a helical membrane-spanning segment; it reads KPKGALAVILVLTLTILVFWLGVYAVFFARG.

It is found in the cell membrane. The catalysed reaction is 4 Fe(II)-[cytochrome c] + O2 + 8 H(+)(in) = 4 Fe(III)-[cytochrome c] + 2 H2O + 4 H(+)(out). This chain is Cytochrome c oxidase polypeptide 2A (cbaD), found in Thermus thermophilus (strain ATCC 27634 / DSM 579 / HB8).